Reading from the N-terminus, the 328-residue chain is Malate dehydrogenase (328 aa).

12–18 (GAAGQIA) serves as a coordination point for NAD(+). Substrate is bound by residues arginine 93 and arginine 99. NAD(+) is bound by residues asparagine 106, glutamine 113, and 130–132 (VGN). The substrate site is built by asparagine 132 and arginine 163. Histidine 188 functions as the Proton acceptor in the catalytic mechanism.

It belongs to the LDH/MDH superfamily. MDH type 2 family.

The enzyme catalyses (S)-malate + NAD(+) = oxaloacetate + NADH + H(+). Its function is as follows. Catalyzes the reversible oxidation of malate to oxaloacetate. This Burkholderia cenocepacia (strain ATCC BAA-245 / DSM 16553 / LMG 16656 / NCTC 13227 / J2315 / CF5610) (Burkholderia cepacia (strain J2315)) protein is Malate dehydrogenase.